The sequence spans 490 residues: NADP-reducing hydrogenase subunit HndC (490 aa).

2 consecutive 4Fe-4S ferredoxin-type domains span residues 433-462 (LTYT…GTKK) and 463-490 (QPHT…IIKQ).

This sequence belongs to the complex I 51 kDa subunit family. In terms of assembly, heterotetramer composed of HndA, HndB, HndC and HndD subunits. HndC is probably the reducing subunit.

It catalyses the reaction H2 + NADP(+) = NADPH + H(+). With respect to regulation, inhibited by oxygen. Catalyzes the reduction of NADP in the presence of molecular H2 to yield NADPH. This chain is NADP-reducing hydrogenase subunit HndC (hndC), found in Solidesulfovibrio fructosivorans (Desulfovibrio fructosivorans).